Reading from the N-terminus, the 315-residue chain is Calumenin (315 aa).

Positions 1–19 are cleaved as a signal peptide; it reads MDLRQFLMCLSLCTAFALS. Position 44 is a phosphoserine (S44). At Y47 the chain carries Phosphotyrosine. T65 bears the Phosphothreonine mark. 6 consecutive EF-hand domains span residues 68–103, 104–139, 151–186, 188–223, 229–264, and 265–300; these read ESKE…AQKR, WIYE…YVLD, QMMV…EEYD, MKDI…HDGN, WVKT…SDYD, and HAEA…FVGS. Residue S69 is modified to Phosphoserine; by FAM20C. Residues D81, D83, D85, E92, D117, N119, D121, and E128 each contribute to the Ca(2+) site. N131 carries N-linked (GlcNAc...) (complex) asparagine glycosylation. Ca(2+) is bound at residue D164. At K165 the chain carries N6-acetyllysine. 12 residues coordinate Ca(2+): D166, D168, E175, D201, N203, D205, E212, D242, N244, D246, K248, and E253. A Phosphothreonine modification is found at T254. S261 and S277 each carry phosphoserine. Ca(2+) contacts are provided by D278, N280, D282, K284, and E289. Residues 312-315 carry the Prevents secretion from ER motif; the sequence is HDEF.

The protein belongs to the CREC family. As to quaternary structure, interacts with GGCX. In terms of tissue distribution, ubiquitously expressed. Expressed at high levels in heart, placenta and skeletal muscle, at lower levels in lung, kidney and pancreas and at very low levels in brain and liver.

The protein localises to the endoplasmic reticulum membrane. The protein resides in the golgi apparatus. It is found in the secreted. It localises to the melanosome. Its subcellular location is the sarcoplasmic reticulum lumen. Its function is as follows. Involved in regulation of vitamin K-dependent carboxylation of multiple N-terminal glutamate residues. Seems to inhibit gamma-carboxylase GGCX. Binds 7 calcium ions with a low affinity. The sequence is that of Calumenin (CALU) from Homo sapiens (Human).